Reading from the N-terminus, the 363-residue chain is Pyruvate dehydrogenase E1 component subunit alpha, mitochondrial (363 aa).

A mitochondrion-targeting transit peptide spans 1 to 2 (RN). Lysine 36 is subject to N6-acetyllysine; alternate. Position 36 is an N6-succinyllysine; alternate (lysine 36). 11 residues coordinate pyruvate: histidine 65, tyrosine 91, arginine 92, alanine 130, glycine 138, valine 140, aspartate 169, glycine 170, alanine 171, asparagine 198, and tyrosine 200. Residues tyrosine 91 and arginine 92 each contribute to the thiamine diphosphate site. Glycine 138, valine 140, aspartate 169, glycine 170, alanine 171, and asparagine 198 together coordinate thiamine diphosphate. Aspartate 169 is a Mg(2+) binding site. Positions 198 and 200 each coordinate Mg(2+). The residue at position 205 (serine 205) is a Phosphoserine; by PDK1. Lysine 217 carries the post-translational modification N6-acetyllysine; alternate. Position 217 is an N6-succinyllysine; alternate (lysine 217). An N6-acetyllysine modification is found at lysine 240. Lysine 250 carries the N6-succinyllysine modification. Histidine 265 lines the thiamine diphosphate pocket. A Phosphoserine; by PDK1, PDK2, PDK3 and PDK4 modification is found at serine 266. The residue at position 268 (serine 268) is a Phosphoserine. Serine 273 is subject to Phosphoserine; by PDK1, PDK2, PDK3 and PDK4. Position 274 is a phosphotyrosine (tyrosine 274). Position 286 is an N6-acetyllysine; alternate (lysine 286). The residue at position 286 (lysine 286) is an N6-succinyllysine; alternate. 2 positions are modified to N6-acetyllysine: lysine 294 and lysine 309. Lysine 358 bears the N6-succinyllysine mark.

As to quaternary structure, heterotetramer of two PDHA1 and two PDHB subunits. The heterotetramer interacts with DLAT, and is part of the multimeric pyruvate dehydrogenase complex that contains multiple copies of pyruvate dehydrogenase (E1), dihydrolipoamide acetyltransferase (DLAT, E2) and lipoamide dehydrogenase (DLD, E3). These subunits are bound to an inner core composed of about 48 DLAT and 12 PDHX molecules. Thiamine diphosphate serves as cofactor. It depends on Mg(2+) as a cofactor. Post-translationally, phosphorylation at Ser-205, Ser-266 and Ser-273 by PDK family kinases inactivates the enzyme; for this phosphorylation at a single site is sufficient. Phosphorylation at Ser-266 interferes with access to active site, and thereby inactivates the enzyme. Dephosphorylation at all three sites, i.e. at Ser-205, Ser-266 and Ser-273, is required for reactivation. Acetylation alters the phosphorylation pattern. Deacetylated by SIRT3.

Its subcellular location is the mitochondrion matrix. The catalysed reaction is N(6)-[(R)-lipoyl]-L-lysyl-[protein] + pyruvate + H(+) = N(6)-[(R)-S(8)-acetyldihydrolipoyl]-L-lysyl-[protein] + CO2. Its activity is regulated as follows. Pyruvate dehydrogenase activity is inhibited by phosphorylation of PDHA1; it is reactivated by dephosphorylation. The pyruvate dehydrogenase complex catalyzes the overall conversion of pyruvate to acetyl-CoA and CO(2), and thereby links the glycolytic pathway to the tricarboxylic cycle. The sequence is that of Pyruvate dehydrogenase E1 component subunit alpha, mitochondrial (PDHA) from Sminthopsis macroura (Stripe-faced dunnart).